Here is a 45-residue protein sequence, read N- to C-terminus: Rubredoxin-1 (45 aa).

At Met1 the chain carries N-formylmethionine. Residues 1–45 (MQKYVCNVCGYEYDPAEHDNVPFDQLPDDWCCPVCGVSKDQFSPA) enclose the Rubredoxin-like domain. Cys6, Cys9, Cys32, and Cys35 together coordinate Fe cation.

It belongs to the rubredoxin family. Fe(3+) is required as a cofactor.

Its subcellular location is the cytoplasm. Functionally, rubredoxin is a small nonheme, iron protein lacking acid-labile sulfide. Its single Fe, chelated to 4 Cys, functions as an electron acceptor and may also stabilize the conformation of the molecule. Electron acceptor for cytoplasmic lactate dehydrogenase. This Desulfovibrio desulfuricans (strain ATCC 27774 / DSM 6949 / MB) protein is Rubredoxin-1 (rd1).